Consider the following 838-residue polypeptide: Ras-interacting protein RIP3 (838 aa).

Disordered regions lie at residues valine 66–alanine 97, lysine 157–lysine 290, and asparagine 305–alanine 336. Composition is skewed to low complexity over residues serine 67 to alanine 97, lysine 157 to proline 241, and proline 248 to glutamine 284. Residues glutamine 310–lysine 321 show a composition bias toward basic and acidic residues. In terms of domain architecture, CRIM spans glutamine 441–asparagine 515. 2 disordered regions span residues lysine 522–glutamine 581 and glutamine 594–alanine 646. Composition is skewed to low complexity over residues asparagine 537 to asparagine 556, glutamine 563 to glutamine 581, and glutamine 594 to glutamine 620. The span at valine 621–asparagine 631 shows a compositional bias: gly residues. The RBD domain occupies leucine 648–arginine 717.

It belongs to the SIN1 family. In terms of assembly, interacts with activated RasG. Part of a complex, TORC2, consisting of tor, lst8, piaA and ripA. Additional proteins, such as 14-3-3 and heat-shock proteins, may also belong to the TORC2 complex.

Functionally, component of a Ras-regulated pathway involved in integrating chemotaxis and signal relay pathways that are essential for aggregation. This chain is Ras-interacting protein RIP3 (ripA), found in Dictyostelium discoideum (Social amoeba).